A 172-amino-acid polypeptide reads, in one-letter code: Large ribosomal subunit protein uL10 (172 aa).

The protein belongs to the universal ribosomal protein uL10 family. In terms of assembly, part of the ribosomal stalk of the 50S ribosomal subunit. The N-terminus interacts with L11 and the large rRNA to form the base of the stalk. The C-terminus forms an elongated spine to which L12 dimers bind in a sequential fashion forming a multimeric L10(L12)X complex.

Forms part of the ribosomal stalk, playing a central role in the interaction of the ribosome with GTP-bound translation factors. The polypeptide is Large ribosomal subunit protein uL10 (Bartonella tribocorum (strain CIP 105476 / IBS 506)).